Consider the following 330-residue polypeptide: Glycerol-3-phosphate dehydrogenase [NAD(P)+] (330 aa).

Residues tryptophan 11, arginine 33, and lysine 105 each contribute to the NADPH site. Sn-glycerol 3-phosphate contacts are provided by lysine 105, glycine 133, and serine 135. Position 137 (alanine 137) interacts with NADPH. Lysine 188, aspartate 241, serine 251, arginine 252, and asparagine 253 together coordinate sn-glycerol 3-phosphate. Catalysis depends on lysine 188, which acts as the Proton acceptor. Arginine 252 is an NADPH binding site. NADPH-binding residues include valine 276 and glutamate 278.

This sequence belongs to the NAD-dependent glycerol-3-phosphate dehydrogenase family.

It is found in the cytoplasm. It carries out the reaction sn-glycerol 3-phosphate + NAD(+) = dihydroxyacetone phosphate + NADH + H(+). The catalysed reaction is sn-glycerol 3-phosphate + NADP(+) = dihydroxyacetone phosphate + NADPH + H(+). Its pathway is membrane lipid metabolism; glycerophospholipid metabolism. Catalyzes the reduction of the glycolytic intermediate dihydroxyacetone phosphate (DHAP) to sn-glycerol 3-phosphate (G3P), the key precursor for phospholipid synthesis. The chain is Glycerol-3-phosphate dehydrogenase [NAD(P)+] from Acidovorax sp. (strain JS42).